The chain runs to 188 residues: Pyridoxal 5'-phosphate synthase subunit PdxT (188 aa).

46 to 48 is a binding site for L-glutamine; it reads GES. Residue Cys78 is the Nucleophile of the active site. L-glutamine contacts are provided by residues Arg105 and 134 to 135; that span reads IR. Active-site charge relay system residues include His170 and Glu172.

This sequence belongs to the glutaminase PdxT/SNO family. In terms of assembly, in the presence of PdxS, forms a dodecamer of heterodimers. Only shows activity in the heterodimer.

The catalysed reaction is aldehydo-D-ribose 5-phosphate + D-glyceraldehyde 3-phosphate + L-glutamine = pyridoxal 5'-phosphate + L-glutamate + phosphate + 3 H2O + H(+). It catalyses the reaction L-glutamine + H2O = L-glutamate + NH4(+). Its pathway is cofactor biosynthesis; pyridoxal 5'-phosphate biosynthesis. Functionally, catalyzes the hydrolysis of glutamine to glutamate and ammonia as part of the biosynthesis of pyridoxal 5'-phosphate. The resulting ammonia molecule is channeled to the active site of PdxS. The protein is Pyridoxal 5'-phosphate synthase subunit PdxT of Desulforamulus reducens (strain ATCC BAA-1160 / DSM 100696 / MI-1) (Desulfotomaculum reducens).